Consider the following 165-residue polypeptide: Phosphopantetheine adenylyltransferase (165 aa).

A substrate-binding site is contributed by Ser10. Residues 10–11 and His18 contribute to the ATP site; that span reads SF. Substrate-binding residues include Lys42, Thr79, and Arg93. ATP is bound by residues 94–96, Glu104, and 129–135; these read GLR and VRPITAT.

It belongs to the bacterial CoaD family. As to quaternary structure, homohexamer. It depends on Mg(2+) as a cofactor.

Its subcellular location is the cytoplasm. It catalyses the reaction (R)-4'-phosphopantetheine + ATP + H(+) = 3'-dephospho-CoA + diphosphate. The protein operates within cofactor biosynthesis; coenzyme A biosynthesis; CoA from (R)-pantothenate: step 4/5. Functionally, reversibly transfers an adenylyl group from ATP to 4'-phosphopantetheine, yielding dephospho-CoA (dPCoA) and pyrophosphate. This chain is Phosphopantetheine adenylyltransferase, found in Rhodopseudomonas palustris (strain HaA2).